A 254-amino-acid chain; its full sequence is Proteasome subunit alpha (254 aa).

The tract at residues 231 to 254 is disordered; the sequence is ESGAASADGEAETEAETDSGSDEE. Residues 239–254 show a composition bias toward acidic residues; sequence GEAETEAETDSGSDEE.

It belongs to the peptidase T1A family. As to quaternary structure, the 20S proteasome core is composed of 14 alpha and 14 beta subunits that assemble into four stacked heptameric rings, resulting in a barrel-shaped structure. The two inner rings, each composed of seven catalytic beta subunits, are sandwiched by two outer rings, each composed of seven alpha subunits. The catalytic chamber with the active sites is on the inside of the barrel. Has probably a gated structure, the ends of the cylinder being occluded by the N-termini of the alpha-subunits. Is likely capped by the proteasome-associated ATPase, ARC. The N-terminus is blocked.

Its subcellular location is the cytoplasm. The protein operates within protein degradation; proteasomal Pup-dependent pathway. Its activity is regulated as follows. The formation of the proteasomal ATPase ARC-20S proteasome complex, likely via the docking of the C-termini of ARC into the intersubunit pockets in the alpha-rings, may trigger opening of the gate for substrate entry. Interconversion between the open-gate and close-gate conformations leads to a dynamic regulation of the 20S proteasome proteolysis activity. Peptidolytic activity is completely inhibited by lactacystin, and to a lesser extent, by N-acetyl-Leu-Leu-norleucinal (Ac-LLnL) and benzoyloxycarbonyl-Leu-Leu-Leu-vinylsulfone (Z-LLL-VS) in vitro. In terms of biological role, component of the proteasome core, a large protease complex with broad specificity involved in protein degradation. The S.coelicolor proteasome is able to cleave oligopeptides after hydrophobic residues, but not after basic or acidic residues, thus displaying chymotrypsin-like activity but not trypsin-like activity. The chain is Proteasome subunit alpha from Streptomyces coelicolor (strain ATCC BAA-471 / A3(2) / M145).